A 189-amino-acid polypeptide reads, in one-letter code: Protein GrpE (189 aa).

Residues 1–31 (MSKKHMKGNGGEVPENSEMSGSEELVAVEPG) form a disordered region.

The protein belongs to the GrpE family. Homodimer.

Its subcellular location is the cytoplasm. In terms of biological role, participates actively in the response to hyperosmotic and heat shock by preventing the aggregation of stress-denatured proteins, in association with DnaK and GrpE. It is the nucleotide exchange factor for DnaK and may function as a thermosensor. Unfolded proteins bind initially to DnaJ; upon interaction with the DnaJ-bound protein, DnaK hydrolyzes its bound ATP, resulting in the formation of a stable complex. GrpE releases ADP from DnaK; ATP binding to DnaK triggers the release of the substrate protein, thus completing the reaction cycle. Several rounds of ATP-dependent interactions between DnaJ, DnaK and GrpE are required for fully efficient folding. In Syntrophobacter fumaroxidans (strain DSM 10017 / MPOB), this protein is Protein GrpE.